The chain runs to 910 residues: von Willebrand factor A domain-containing protein DDB_G0292740 (910 aa).

The VIT domain maps to 63–194; the sequence is AYQYYNVSSF…SITIHITMIS (132 aa). Positions 297 to 318 are disordered; sequence IKNNPHSDSDSDSDDEENKKEN. The region spanning 346–515 is the VWFA domain; sequence EFIFLIDCSG…DMETEVMKLL (170 aa). Positions 703-719 are enriched in low complexity; that stretch reads QYQQQQQQQQQNFNSGF. Residues 703-815 are disordered; that stretch reads QYQQQQQQQQ…TQSESTPSND (113 aa). Residues 720–749 are compositionally biased toward pro residues; it reads APPPPPMMSSGPPPPPGSSFGAPPPPPPGG. A compositionally biased stretch (low complexity) spans 750–802; that stretch reads AFPTSSISEKKSSSQSSSSYLPPTMSLSRKSSLSPSSPSKNYPSPKLSSPSLS. Residues 803–815 are compositionally biased toward polar residues; it reads YGSTQSESTPSND.

The chain is von Willebrand factor A domain-containing protein DDB_G0292740 from Dictyostelium discoideum (Social amoeba).